The sequence spans 287 residues: (S)-phenoxypropionate/alpha-ketoglutarate-dioxygenase (287 aa).

2 residues coordinate Fe cation: H102 and D104. Residues T129 and W242 each contribute to the 2-oxoglutarate site. H257 lines the Fe cation pocket. R268 contacts 2-oxoglutarate.

It belongs to the TfdA dioxygenase family. As to quaternary structure, monomer. Fe cation is required as a cofactor. L-ascorbate serves as cofactor.

It catalyses the reaction (S)-2-(4-chloro-2-methylphenoxy)propanoate + 2-oxoglutarate + O2 = 2-methyl-4-chlorophenol + pyruvate + succinate + CO2. The enzyme catalyses (S)-(2,4-dichlorophenoxy)propanoate + 2-oxoglutarate + O2 = 2,4-dichlorophenol + pyruvate + succinate + CO2. The protein operates within xenobiotic degradation; 2-(2,4-dichlorophenoxy)propanoate degradation. In terms of biological role, involved in the degradation of the phenoxypropionate herbicides. Catalyzes the enantiospecific cleavage of the ether bond in the herbicid S-dichlorprop ((S)-2-(2,4-dichlorophenoxy)propionate)(S-2,4-DP) and S-mecoprop ((S)-2-(4-chloro-2-methylphenoxy)propionate)(S-2,4-MCPP). It can also accept (RS)-2-(4-chloro-2-methylphenoxy)propionate ((RS)-2,4-MCPP) and phenoxyacetate derivatives such as 2,4-dichlorophenoxyacetate (2,4-D), however it can only accept 2-oxoglutarate as oxygen acceptor. The polypeptide is (S)-phenoxypropionate/alpha-ketoglutarate-dioxygenase (Sphingobium herbicidovorans (strain ATCC 700291 / DSM 11019 / CCUG 56400 / KCTC 2939 / LMG 18315 / NBRC 16415 / MH) (Sphingomonas herbicidovorans)).